The primary structure comprises 938 residues: Isoleucine--tRNA ligase (938 aa).

The 'HIGH' region signature appears at 58–68 (PYANGNIHLGH). E562 contributes to the L-isoleucyl-5'-AMP binding site. The short motif at 603 to 607 (KMSKS) is the 'KMSKS' region element. Position 606 (K606) interacts with ATP. Positions 901, 904, 921, and 924 each coordinate Zn(2+).

It belongs to the class-I aminoacyl-tRNA synthetase family. IleS type 1 subfamily. Monomer. It depends on Zn(2+) as a cofactor.

The protein localises to the cytoplasm. The catalysed reaction is tRNA(Ile) + L-isoleucine + ATP = L-isoleucyl-tRNA(Ile) + AMP + diphosphate. Its function is as follows. Catalyzes the attachment of isoleucine to tRNA(Ile). As IleRS can inadvertently accommodate and process structurally similar amino acids such as valine, to avoid such errors it has two additional distinct tRNA(Ile)-dependent editing activities. One activity is designated as 'pretransfer' editing and involves the hydrolysis of activated Val-AMP. The other activity is designated 'posttransfer' editing and involves deacylation of mischarged Val-tRNA(Ile). This chain is Isoleucine--tRNA ligase, found in Glaesserella parasuis serovar 5 (strain SH0165) (Haemophilus parasuis).